A 94-amino-acid polypeptide reads, in one-letter code: Co-chaperonin GroES (94 aa).

It belongs to the GroES chaperonin family. In terms of assembly, heptamer of 7 subunits arranged in a ring. Interacts with the chaperonin GroEL.

The protein resides in the cytoplasm. Together with the chaperonin GroEL, plays an essential role in assisting protein folding. The GroEL-GroES system forms a nano-cage that allows encapsulation of the non-native substrate proteins and provides a physical environment optimized to promote and accelerate protein folding. GroES binds to the apical surface of the GroEL ring, thereby capping the opening of the GroEL channel. The chain is Co-chaperonin GroES from Thermoanaerobacter pseudethanolicus (strain ATCC 33223 / 39E) (Clostridium thermohydrosulfuricum).